We begin with the raw amino-acid sequence, 393 residues long: Telomeric repeat-binding factor 2-interacting protein 1 (393 aa).

An N-acetylalanine modification is found at A2. 2 positions are modified to phosphoserine: S36 and S43. In terms of domain architecture, BRCT spans 78–101; the sequence is FISTQYILDCVDRNEKLDLEAYRL. Positions 104–132 are disordered; it reads TEQASDPKPGASTEGSTEPEPQPLTGRIA. K111 is covalently cross-linked (Glycyl lysine isopeptide (Lys-Gly) (interchain with G-Cter in SUMO2)). The 61-residue stretch at 125–185 folds into the Myb-like domain; sequence QPLTGRIAYT…SLKDRYLKHL (61 aa). Residues S151 and S153 each carry the phosphoserine modification. K191 participates in a covalent cross-link: Glycyl lysine isopeptide (Lys-Gly) (interchain with G-Cter in SUMO2). Residues 193-304 form a disordered region; sequence LLGNAPVSPS…EEEPKVSTQE (112 aa). 2 positions are modified to phosphoserine: S200 and S203. Residues K205, K209, and K237 each participate in a glycyl lysine isopeptide (Lys-Gly) (interchain with G-Cter in SUMO2) cross-link. Basic and acidic residues predominate over residues 223–252; sequence QNKRAPDLPEEECVKGEIKENGEADNKLFE. Residues 282-297 show a composition bias toward acidic residues; the sequence is TPEEDSETQPDEEEEE. K366 is covalently cross-linked (Glycyl lysine isopeptide (Lys-Gly) (interchain with G-Cter in SUMO2)). The short motif at 377–393 is the Nuclear localization signal element; it reads KKFGAQNVARRIEFRKK.

Belongs to the RAP1 family. In terms of assembly, homodimer. Component of the shelterin complex (telosome) composed of TERF1, TERF2, TINF2, TERF2IP ACD and POT1. Binds to TERF2 (but not TERF1) with its C-terminus. Interacts with SLX4/BTBD12. Interacts with TERF2; the interaction is direct. Does not interact with TERF1. Associates with the I-kappa-B-kinase (IKK) core complex, composed of CHUK, IKBKB and IKBKG.

It is found in the nucleus. The protein resides in the cytoplasm. The protein localises to the chromosome. It localises to the telomere. Acts both as a regulator of telomere function and as a transcription regulator. Involved in the regulation of telomere length and protection as a component of the shelterin complex (telosome). In contrast to other components of the shelterin complex, it is dispensible for telomere capping and does not participate in the protection of telomeres against non-homologous end-joining (NHEJ)-mediated repair. Instead, it is required to negatively regulate telomere recombination and is essential for repressing homology-directed repair (HDR), which can affect telomere length. Does not bind DNA directly: recruited to telomeric double-stranded 5'-TTAGGG-3' repeats via its interaction with TERF2. Independently of its function in telomeres, also acts as a transcription regulator: recruited to extratelomeric 5'-TTAGGG-3' sites via its association with TERF2 or other factors, and regulates gene expression. When cytoplasmic, associates with the I-kappa-B-kinase (IKK) complex and acts as a regulator of the NF-kappa-B signaling by promoting IKK-mediated phosphorylation of RELA/p65, leading to activate expression of NF-kappa-B target genes. The chain is Telomeric repeat-binding factor 2-interacting protein 1 (Terf2ip) from Mus musculus (Mouse).